The primary structure comprises 445 residues: Ubiquitin carboxyl-terminal hydrolase MINDY-3 (445 aa).

C51 acts as the Nucleophile in catalysis. Position 125 is a phosphoserine (S125). Catalysis depends on H287, which acts as the Proton acceptor.

Belongs to the MINDY deubiquitinase family. FAM188 subfamily. In terms of assembly, interacts with COPS5.

It is found in the nucleus. It catalyses the reaction Thiol-dependent hydrolysis of ester, thioester, amide, peptide and isopeptide bonds formed by the C-terminal Gly of ubiquitin (a 76-residue protein attached to proteins as an intracellular targeting signal).. In terms of biological role, hydrolase that can remove 'Lys-48'-linked conjugated ubiquitin from proteins. This is Ubiquitin carboxyl-terminal hydrolase MINDY-3 (MINDY3) from Bos taurus (Bovine).